Consider the following 166-residue polypeptide: 16S rRNA aminocarboxypropyltransferase (166 aa).

5 residues coordinate S-adenosyl-L-methionine: Thr-17, Ile-62, Leu-84, Tyr-99, and Ser-103.

The protein belongs to the TDD superfamily. TSR3 family.

The protein resides in the cytoplasm. It catalyses the reaction an N(1)-methylpseudouridine in rRNA + S-adenosyl-L-methionine = N(1)-methyl-N(3)-[(3S)-3-amino-3-carboxypropyl]pseudouridine in rRNA + S-methyl-5'-thioadenosine + H(+). In terms of biological role, aminocarboxypropyltransferase that catalyzes the aminocarboxypropyl transfer on pseudouridine corresponding to position 914 in M.jannaschii 16S rRNA. It constitutes the last step in biosynthesis of the hypermodified N1-methyl-N3-(3-amino-3-carboxypropyl) pseudouridine (m1acp3-Psi). This chain is 16S rRNA aminocarboxypropyltransferase, found in Saccharolobus islandicus (strain Y.N.15.51 / Yellowstone #2) (Sulfolobus islandicus).